Here is a 277-residue protein sequence, read N- to C-terminus: Putative phosphoenolpyruvate synthase regulatory protein (277 aa).

157 to 164 provides a ligand contact to ADP; it reads GVSRSGKT.

This sequence belongs to the pyruvate, phosphate/water dikinase regulatory protein family. PSRP subfamily.

It carries out the reaction [pyruvate, water dikinase] + ADP = [pyruvate, water dikinase]-phosphate + AMP + H(+). The enzyme catalyses [pyruvate, water dikinase]-phosphate + phosphate + H(+) = [pyruvate, water dikinase] + diphosphate. Functionally, bifunctional serine/threonine kinase and phosphorylase involved in the regulation of the phosphoenolpyruvate synthase (PEPS) by catalyzing its phosphorylation/dephosphorylation. This Vibrio atlanticus (strain LGP32) (Vibrio splendidus (strain Mel32)) protein is Putative phosphoenolpyruvate synthase regulatory protein.